A 1491-amino-acid polypeptide reads, in one-letter code: Copper-transporting ATPase 1 (1491 aa).

Residues 1–644 lie on the Cytoplasmic side of the membrane; the sequence is MEPSVDANSI…KREIKQWRGS (644 aa). HMA domains follow at residues 8–74 and 85–151; these read NSIT…FDAL and TNTV…LDMG. Cu(+) is bound by residues threonine 18, cysteine 19, and cysteine 22. Threonine 152 carries the post-translational modification Phosphothreonine. Positions 171-237 constitute an HMA 3 domain; that stretch reads VMLKMKVEGM…QIEAVGFPAF (67 aa). Cu(+)-binding residues include cysteine 182 and cysteine 185. Position 270 is a phosphoserine (serine 270). One can recognise an HMA 4 domain in the interval 277-343; sequence STTMFTIEGM…AIEAISPGQY (67 aa). Residues cysteine 288 and cysteine 291 each contribute to the Cu(+) site. Threonine 327 carries the post-translational modification Phosphothreonine. Phosphoserine is present on residues serine 339, serine 353, serine 357, and serine 362. 3 consecutive HMA domains span residues 377-443, 479-545, and 555-621; these read QEAV…FDAA, NKCY…FGAM, and GILE…FEAS. Cysteine 388, cysteine 391, cysteine 490, cysteine 493, cysteine 566, and cysteine 569 together coordinate Cu(+). The chain crosses the membrane as a helical span at residues 645–666; the sequence is FLVSLFFCIPVMGLMVYMMVMD. The Extracellular segment spans residues 667–705; sequence HHLATLHHNQNMSNEEMINMHSAMFLERQILPGLSIMNL. N-linked (GlcNAc...) asparagine glycosylation occurs at asparagine 677. Residues 706–725 form a helical membrane-spanning segment; the sequence is LSLLLCLPVQFCGGWYFYIQ. Residues 726-732 lie on the Cytoplasmic side of the membrane; the sequence is AYKALKH. Residues 733–753 traverse the membrane as a helical segment; the sequence is KTANMDVLIVLATTIAFAYSL. The Extracellular segment spans residues 754 to 772; sequence VILLVAMFERAKVNPITFF. Residues 773–793 traverse the membrane as a helical segment; it reads DTPPMLFVFIALGRWLEHIAK. The Cytoplasmic portion of the chain corresponds to 794–926; it reads GKTSEALAKL…SKAPIQQFAD (133 aa). The chain crosses the membrane as a helical span at residues 927 to 950; it reads KLSGYFVPFIVLVSIVTLLVWIII. Residues 951–980 are Extracellular-facing; the sequence is GFQNFEIVETYFPGYNRSISRTETIIRFAF. An N-linked (GlcNAc...) asparagine glycan is attached at asparagine 966. The chain crosses the membrane as a helical span at residues 981 to 1002; the sequence is QASITVLCIACPCSLGLATPTA. Residues 1003–1347 are Cytoplasmic-facing; it reads VMVGTGVGAQ…LSRKTVKRIR (345 aa). The active-site 4-aspartylphosphate intermediate is aspartate 1035. Glutamate 1072 provides a ligand contact to ATP. Phosphothreonine is present on threonine 1203. Positions 1292 and 1296 each coordinate Mg(2+). The helical transmembrane segment at 1348–1365 threads the bilayer; that stretch reads INFVFALIYNLVGIPIAA. Over 1366-1376 the chain is Extracellular; the sequence is GVFLPIGLVLQ. Residues 1377 to 1396 form a helical membrane-spanning segment; sequence PWMGSAAMAASSVSVVLSSL. Residues 1397–1491 are Cytoplasmic-facing; that stretch reads FLKLYRKPTY…DFREDDDTTL (95 aa). A phosphoserine mark is found at serine 1421, serine 1423, serine 1451, serine 1454, and serine 1457. The Endocytosis signal signature appears at 1458–1459; it reads LL. Phosphoserine is present on residues serine 1460, serine 1464, serine 1467, and serine 1477. The tract at residues 1477–1491 is PDZD11-binding; it reads SLLVGDFREDDDTTL. An Endocytosis signal motif is present at residues 1478-1479; the sequence is LL.

It belongs to the cation transport ATPase (P-type) (TC 3.A.3) family. Type IB subfamily. Monomer. Interacts with PDZD11. Interacts with ATOX1 and COMMD1. Interacts with TYRP1. Directly interacts with SOD3; this interaction is copper-dependent and is required for SOD3 activity. Widely expressed. Highly expressed in pituitary endocrine cells. Expressed in melanocytes (at protein level). Expressed in motor neuron (at protein level). Expressed in hippocampal neuron (at protein level). In the kidney, it is detected in the proximal and distal tubules (at protein level). Expressed in aorta (at protein level).

Its subcellular location is the golgi apparatus. The protein localises to the trans-Golgi network membrane. It is found in the cell membrane. It localises to the melanosome membrane. The protein resides in the early endosome membrane. Its subcellular location is the cell projection. The protein localises to the axon. It is found in the dendrite. It localises to the postsynaptic density. The enzyme catalyses Cu(+)(in) + ATP + H2O = Cu(+)(out) + ADP + phosphate + H(+). Its function is as follows. ATP-driven copper (Cu(+)) ion pump that plays an important role in intracellular copper ion homeostasis. Within a catalytic cycle, acquires Cu(+) ion from donor protein on the cytoplasmic side of the membrane and delivers it to acceptor protein on the lumenal side. The transfer of Cu(+) ion across the membrane is coupled to ATP hydrolysis and is associated with a transient phosphorylation that shifts the pump conformation from inward-facing to outward-facing state. Under physiological conditions, at low cytosolic copper concentration, it is localized at the trans-Golgi network (TGN) where it transfers Cu(+) ions to cuproenzymes of the secretory pathway. Upon elevated cytosolic copper concentrations, it relocalizes to the plasma membrane where it is responsible for the export of excess Cu(+) ions. May play a dual role in neuron function and survival by regulating cooper efflux and neuronal transmission at the synapse as well as by supplying Cu(+) ions to enzymes such as PAM, TYR and SOD3. In the melanosomes of pigmented cells, provides copper cofactor to TYR to form an active TYR holoenzyme for melanin biosynthesis. This is Copper-transporting ATPase 1 from Mus musculus (Mouse).